A 167-amino-acid chain; its full sequence is UPF0587 protein F46B6.12 (167 aa).

4 residues coordinate Zn(2+): cysteine 34, cysteine 37, cysteine 68, and cysteine 71.

This sequence belongs to the UPF0587 family.

This is UPF0587 protein F46B6.12 from Caenorhabditis elegans.